The sequence spans 97 residues: UPF0235 protein AZOSEA09540 (97 aa).

The protein belongs to the UPF0235 family.

The polypeptide is UPF0235 protein AZOSEA09540 (Aromatoleum aromaticum (strain DSM 19018 / LMG 30748 / EbN1) (Azoarcus sp. (strain EbN1))).